Reading from the N-terminus, the 75-residue chain is Exodeoxyribonuclease 7 small subunit (75 aa).

It belongs to the XseB family. Heterooligomer composed of large and small subunits.

Its subcellular location is the cytoplasm. It carries out the reaction Exonucleolytic cleavage in either 5'- to 3'- or 3'- to 5'-direction to yield nucleoside 5'-phosphates.. In terms of biological role, bidirectionally degrades single-stranded DNA into large acid-insoluble oligonucleotides, which are then degraded further into small acid-soluble oligonucleotides. In Chlamydia felis (strain Fe/C-56) (Chlamydophila felis), this protein is Exodeoxyribonuclease 7 small subunit.